The chain runs to 164 residues: Peptidyl-prolyl cis-trans isomerase A-like 4G (164 aa).

The region spanning 7–163 (FFDITVDGKP…KKITIADCGQ (157 aa)) is the PPIase cyclophilin-type domain.

Belongs to the cyclophilin-type PPIase family. PPIase A subfamily.

Its subcellular location is the cytoplasm. The enzyme catalyses [protein]-peptidylproline (omega=180) = [protein]-peptidylproline (omega=0). PPIases accelerate the folding of proteins. It catalyzes the cis-trans isomerization of proline imidic peptide bonds in oligopeptides. This Homo sapiens (Human) protein is Peptidyl-prolyl cis-trans isomerase A-like 4G (PPIAL4G).